We begin with the raw amino-acid sequence, 82 residues long: Small ribosomal subunit protein bS16 (82 aa).

It belongs to the bacterial ribosomal protein bS16 family.

The polypeptide is Small ribosomal subunit protein bS16 (Saccharophagus degradans (strain 2-40 / ATCC 43961 / DSM 17024)).